Here is a 353-residue protein sequence, read N- to C-terminus: Glycerol-3-phosphate dehydrogenase [NAD(+)], cytoplasmic (353 aa).

At A2 the chain carries Blocked amino end (Ala). NAD(+)-binding positions include 11-16 (GSGNWG), F98, K121, and A155. Residue K121 coordinates substrate. The Proton acceptor role is filled by K206. R270 and Q299 together coordinate NAD(+). Substrate is bound at residue 270–271 (RN).

The protein belongs to the NAD-dependent glycerol-3-phosphate dehydrogenase family. Homodimer.

It is found in the cytoplasm. It carries out the reaction sn-glycerol 3-phosphate + NAD(+) = dihydroxyacetone phosphate + NADH + H(+). The protein operates within phospholipid metabolism; alpha-glycerophosphate cycle. The protein is Glycerol-3-phosphate dehydrogenase [NAD(+)], cytoplasmic of Drosophila virilis (Fruit fly).